We begin with the raw amino-acid sequence, 377 residues long: Putative glutamate--cysteine ligase 2 (377 aa).

It belongs to the glutamate--cysteine ligase type 2 family. YbdK subfamily.

The enzyme catalyses L-cysteine + L-glutamate + ATP = gamma-L-glutamyl-L-cysteine + ADP + phosphate + H(+). Its function is as follows. ATP-dependent carboxylate-amine ligase which exhibits weak glutamate--cysteine ligase activity. This is Putative glutamate--cysteine ligase 2 from Chromobacterium violaceum (strain ATCC 12472 / DSM 30191 / JCM 1249 / CCUG 213 / NBRC 12614 / NCIMB 9131 / NCTC 9757 / MK).